The chain runs to 86 residues: Palustrin-3b (86 aa).

An N-terminal signal peptide occupies residues 1-22 (MFTLKKPLLLIVLLGIISLSLC). A propeptide spanning residues 23-36 (EQERNADEDEESEI) is cleaved from the precursor. Cys-81 and Cys-86 form a disulfide bridge.

Expressed by the skin glands.

The protein resides in the secreted. Antimicrobial peptide. This chain is Palustrin-3b, found in Odorrana versabilis (Chinese bamboo leaf odorous frog).